The chain runs to 466 residues: MKLWGGRFTHQVDDLVNTFNSSISFDSRMYKEDIIGSIAHVTMLGEEKIIPKEDSKKIASGLYEILNKLNQGVLKIDNSSEDIHSFIESTLTDYIGEEGKKLHTGRSRNDQVTLDTKLYLKGYIKILICEILNLEKTLLNLSSENKETIMPGYTHMQKAQPITFAHHILAYSEMFKRDISRLLDCYKRLDEMPLGSGALATTTYPINREKVANLLGFSKVTLNSLDSVSDRDYAIETLSCLSLLMMHLSRFSEEIIIWSTDEFKFIELDDSYSTGSSIMPQKKNPDVAELVRGKTGRVYGDLMTLLTVMKGLPLAYNKDMQEDKEALFDGLDTTLLSIKTFNGMIKTMKINKSIMKTSASSGFTNATDVADYLVKKGVAFRDAHEIVGNLILYCIDEGKSIDNLSLSEFKTFSNKFENDIYKAINLLTCIEERKVIGGPSISSINIQIEHLNNFIQESNEKLNLLK.

It belongs to the lyase 1 family. Argininosuccinate lyase subfamily.

Its subcellular location is the cytoplasm. The enzyme catalyses 2-(N(omega)-L-arginino)succinate = fumarate + L-arginine. The protein operates within amino-acid biosynthesis; L-arginine biosynthesis; L-arginine from L-ornithine and carbamoyl phosphate: step 3/3. This Clostridium perfringens (strain ATCC 13124 / DSM 756 / JCM 1290 / NCIMB 6125 / NCTC 8237 / Type A) protein is Argininosuccinate lyase.